A 193-amino-acid polypeptide reads, in one-letter code: Acyl carrier protein phosphodiesterase (193 aa).

The protein belongs to the AcpH family.

It carries out the reaction holo-[ACP] + H2O = apo-[ACP] + (R)-4'-phosphopantetheine + H(+). Converts holo-ACP to apo-ACP by hydrolytic cleavage of the phosphopantetheine prosthetic group from ACP. This Escherichia coli O6:H1 (strain CFT073 / ATCC 700928 / UPEC) protein is Acyl carrier protein phosphodiesterase.